We begin with the raw amino-acid sequence, 201 residues long: Small ribosomal subunit protein uS4c (201 aa).

Residues 89–150 (MRLDNIVFRL…RQKSQAIITK (62 aa)) enclose the S4 RNA-binding domain.

It belongs to the universal ribosomal protein uS4 family. Part of the 30S ribosomal subunit. Contacts protein S5. The interaction surface between S4 and S5 is involved in control of translational fidelity.

Its subcellular location is the plastid. The protein resides in the chloroplast. In terms of biological role, one of the primary rRNA binding proteins, it binds directly to 16S rRNA where it nucleates assembly of the body of the 30S subunit. Functionally, with S5 and S12 plays an important role in translational accuracy. This Physcomitrium patens (Spreading-leaved earth moss) protein is Small ribosomal subunit protein uS4c (rps4).